The following is a 249-amino-acid chain: Small ribosomal subunit protein uS2 (249 aa).

Belongs to the universal ribosomal protein uS2 family.

This is Small ribosomal subunit protein uS2 from Listeria monocytogenes serovar 1/2a (strain ATCC BAA-679 / EGD-e).